A 194-amino-acid chain; its full sequence is uncharacterized protein (194 aa).

One can recognise an HTH tetR-type domain in the interval 6–66 (EFDTALVLHR…SAVKSYLEGK (61 aa)). A DNA-binding region (H-T-H motif) is located at residues 29–48 (SLQDLLSHLGIARQSLYDTY).

This is an uncharacterized protein from Bacillus subtilis (strain 168).